Here is a 741-residue protein sequence, read N- to C-terminus: uncharacterized protein (741 aa).

Residues 64–103 are a coiled coil; that stretch reads VETLLCMLEQLTIRIEFLTKEIAQQEAAYKDIQNTQKSLV. The span at 137–155 shows a compositional bias: polar residues; sequence FERQNRTAPLQSKVTTASL. Disordered stretches follow at residues 137–214, 280–318, and 330–364; these read FERQ…TGLP, RTYS…SKSS, and SVSS…FLTP. Composition is skewed to low complexity over residues 161–173 and 197–209; these read RTSM…ASRT and KSKS…KSLA. The span at 298-308 shows a compositional bias: polar residues; that stretch reads SHLPNRTTEVP. Low complexity-rich tracts occupy residues 309-318 and 330-344; these read SISKQLSKSS and SVSS…TPQS. Residues 346 to 356 show a composition bias toward polar residues; sequence PRAQSASTETA. 499-506 is a binding site for ATP; sequence GPPGTGKT.

This sequence belongs to the AAA ATPase family.

The protein resides in the cytoplasm. Its subcellular location is the nucleus. This is an uncharacterized protein from Schizosaccharomyces pombe (strain 972 / ATCC 24843) (Fission yeast).